The chain runs to 610 residues: Zinc metalloproteinase-disintegrin-like halysase (610 aa).

Positions M1 to S20 are cleaved as a signal peptide. The propeptide occupies I21–A182. The region spanning K199–P395 is the Peptidase M12B domain. Residue N218 is glycosylated (N-linked (GlcNAc...) asparagine). 3 disulfides stabilise this stretch: C310–C390, C350–C374, and C352–C357. H335 lines the Zn(2+) pocket. E336 is a catalytic residue. 2 residues coordinate Zn(2+): H339 and H345. Residues P403–N488 enclose the Disintegrin domain. Residues V405, N408, F410, E412, E415, and D418 each coordinate Ca(2+). Disulfide bonds link C406-C435, C417-C430, C419-C425, C429-C452, C443-C449, C448-C474, C461-C481, C468-C499, C492-C504, C511-C561, C526-C572, C539-C549, C556-C598, and C592-C603. A D/ECD-tripeptide motif is present at residues E467 to D469.

The protein belongs to the venom metalloproteinase (M12B) family. P-III subfamily. P-IIIa sub-subfamily. Monomer. The cofactor is Zn(2+). In terms of tissue distribution, expressed by the venom gland.

It localises to the secreted. Its activity is regulated as follows. Inhibited by EDTA and EGTA. Not inhibited by PMSF, antipain, pepstatin, and iodoacetamide. In terms of biological role, strongly inhibits the collagen-induced human platelet aggregation (inhibition of alpha-2/beta-1 (ITGA2/ITGB1) integrin). Hydrolyzes the Aalpha-chain of fibrinogen, without cleavage of Bbeta- and gamma-chains. Degrades type IV collagen (but not types I, II and V), fibronectin and vitronectin and also integrins alpha-1/beta-1 (ITGA1/ITGB1) and alpha-5/beta/1 (ITGA5/ITGB1) (but not alpha-V/beta-3 (ITGAV/ITGB3) and alpha-V/beta-5 (ITGAV/ITGB5) integrins). Both metalloproteinase (peptidase M12B) and disintegrin-like domains (recombinantly expressed and named halydin) play characteristic roles to inhibit human platelet aggregation. Induces apoptosis and strongly inhibits proliferation of endothelial cells as well as adhesion of the cells to extracellular matrix proteins. The apoptosis is closely associated with activation of caspase-3 and decreased level of Bcl-X(L)/Bax. Apohalysase, which lacks metalloprotease activity, is also able to induce the apoptosis. Cleaves insulin B chain at '34-His-|-Leu-35', '37-Glu-|-Ala-38', '38-Ala-|-Leu-39', '39-Leu-|-Tyr-40', '40-Tyr-|-Leu-41', '47-Gly-|-Phe-48' and '48-Phe-|-Phe-49' bonds. The protein is Zinc metalloproteinase-disintegrin-like halysase of Gloydius halys (Chinese water mocassin).